Here is a 460-residue protein sequence, read N- to C-terminus: Mercuric reductase (460 aa).

Residues 1–65 form the HMA domain; sequence MTHLKITGMT…AVAGLGYKAM (65 aa). A metal cation contacts are provided by C11 and C14. Positions 110, 130, and 135 each coordinate FAD. Cysteines 136 and 141 form a disulfide. Residues K145 and A211 each coordinate FAD. Hg(2+)-binding residues include C457 and C458.

The protein belongs to the class-I pyridine nucleotide-disulfide oxidoreductase family. Homodimer. FAD serves as cofactor.

The catalysed reaction is Hg + NADP(+) + H(+) = Hg(2+) + NADPH. Functionally, resistance to Hg(2+) in bacteria appears to be governed by a specialized system which includes mercuric reductase. MerA protein is responsible for volatilizing mercury as Hg(0). The sequence is that of Mercuric reductase (merA) from Serratia marcescens.